The sequence spans 717 residues: DNA ligase (717 aa).

Residues 44–48, 93–94, and Glu127 each bind NAD(+); these read DADYD and SL. Residue Lys129 is the N6-AMP-lysine intermediate of the active site. NAD(+) contacts are provided by Arg150, Glu186, Lys302, and Lys326. Residues Cys431, Cys434, Cys455, and Cys461 each contribute to the Zn(2+) site. A BRCT domain is found at 639–717; that stretch reads ATDSPVAGKT…EDEWLALIGG (79 aa).

The protein belongs to the NAD-dependent DNA ligase family. LigA subfamily. Requires Mg(2+) as cofactor. It depends on Mn(2+) as a cofactor.

The enzyme catalyses NAD(+) + (deoxyribonucleotide)n-3'-hydroxyl + 5'-phospho-(deoxyribonucleotide)m = (deoxyribonucleotide)n+m + AMP + beta-nicotinamide D-nucleotide.. DNA ligase that catalyzes the formation of phosphodiester linkages between 5'-phosphoryl and 3'-hydroxyl groups in double-stranded DNA using NAD as a coenzyme and as the energy source for the reaction. It is essential for DNA replication and repair of damaged DNA. This is DNA ligase from Rhizobium meliloti (strain 1021) (Ensifer meliloti).